A 682-amino-acid polypeptide reads, in one-letter code: Kinesin-like protein KIF2A (682 aa).

Positions 1 to 192 (MVTSLNEDSE…LDYRPLTTSD (192 aa)) are globular. Positions 39–129 (LAPDEEIDPG…GKKDFGLASR (91 aa)) are disordered. Over residues 99–115 (IEQSASRQQNGSVSDIS) the composition is skewed to polar residues. A Kinesin motor domain is found at 198–528 (RICVCVRKRP…LRYANRVKEL (331 aa)). Position 288–295 (288–295 (GQTGSGKT)) interacts with ATP. Residues 638–673 (QLEAILEKKIDILTELRDKVKSFRAALQEEEHASKQ) adopt a coiled-coil conformation.

It belongs to the TRAFAC class myosin-kinesin ATPase superfamily. Kinesin family. MCAK/KIF2 subfamily. In terms of assembly, interacts with aurka and plk1. Post-translationally, phosphorylation by plk1 promotes location at spindle microtubules and spindle poles, and enhances its microtubule depolymerization activity. In terms of processing, phosphorylation by AURKA interferes with location at spindle microtubules and spindle poles, and inhibits its microtubule depolymerization activity.

The protein localises to the cytoplasm. It is found in the cytoskeleton. It localises to the microtubule organizing center. The protein resides in the centrosome. Its subcellular location is the spindle pole. The protein localises to the spindle. Its function is as follows. Plus end-directed microtubule-dependent motor. May regulate microtubule dynamics during axonal growth. Required for normal progression through mitosis. Required for normal congress of chromosomes at the metaphase plate. Required for normal spindle dynamics during mitosis. Promotes spindle turnover. Implicated in formation of bipolar mitotic spindles Has microtubule depolymerization activity. In Xenopus laevis (African clawed frog), this protein is Kinesin-like protein KIF2A (kif2a).